Here is a 1116-residue protein sequence, read N- to C-terminus: Anillin (1116 aa).

Basic and acidic residues-rich tracts occupy residues 1–25 (MDPF…KMAD) and 85–94 (KQPKTPELPK). Disordered regions lie at residues 1–188 (MDPF…PVGR), 205–257 (DLSH…PKDT), 304–363 (KPNE…KVAT), and 443–522 (NVWT…PRLV). Residues 101 to 119 (ASHQQLRATNQTPQVSLLS) are compositionally biased toward polar residues. A compositionally biased stretch (basic and acidic residues) spans 120-133 (SDKELTASDVKDAS). Residues 142–254 (LADQRRYWDN…QDTTSCSQRP (113 aa)) are interactions with myh9 and myh10. A compositionally biased stretch (low complexity) spans 226–242 (SKESTTSSASASMNSHS). Residues 255 to 418 (KDTTVNKAVC…LKQNDISSTA (164 aa)) are interaction with F-actin. 2 stretches are compositionally biased toward polar residues: residues 304–326 (KPNE…SSPQ) and 336–356 (YSYQ…VQTQ). Residues 416 to 443 (STASLAQQQKKEREKELAALRGRYDRRN) are a coiled coil. Residues 453 to 472 (QGTFPETSSNLPTSDVASCS) are compositionally biased toward polar residues. Residues 975 to 1099 (SVEDKGFLTM…WMQKLNQFLV (125 aa)) form the PH domain.

As to quaternary structure, interacts with and bundles F-actin. Interacts with the non-muscle myosin II heavy chains myh9 and myh10, and these interactions may be enhanced by the phosphorylation of myosin II regulatory light chain by mylk.

The protein resides in the nucleus. The protein localises to the cytoplasm. It is found in the cytoskeleton. It localises to the cell cortex. Its subcellular location is the cell projection. The protein resides in the bleb. Functionally, required for cytokinesis. Essential for the structural integrity of the cleavage furrow and for completion of cleavage furrow ingression. Plays a role in bleb assembly during metaphase and anaphase of mitosis. May play a significant role in podocyte cell migration. The chain is Anillin (anln) from Xenopus laevis (African clawed frog).